Here is a 148-residue protein sequence, read N- to C-terminus: NADPH-dependent 7-cyano-7-deazaguanine reductase (148 aa).

Cysteine 50 (thioimide intermediate) is an active-site residue. Aspartate 57 (proton donor) is an active-site residue. Substrate is bound by residues 72-74 and 91-92; these read VES and HE.

This sequence belongs to the GTP cyclohydrolase I family. QueF type 1 subfamily.

The protein localises to the cytoplasm. The catalysed reaction is 7-aminomethyl-7-carbaguanine + 2 NADP(+) = 7-cyano-7-deazaguanine + 2 NADPH + 3 H(+). It functions in the pathway tRNA modification; tRNA-queuosine biosynthesis. Its function is as follows. Catalyzes the NADPH-dependent reduction of 7-cyano-7-deazaguanine (preQ0) to 7-aminomethyl-7-deazaguanine (preQ1). The sequence is that of NADPH-dependent 7-cyano-7-deazaguanine reductase from Helicobacter pylori (strain P12).